The following is a 258-amino-acid chain: E3 ubiquitin ligase TRIM40 (258 aa).

The RING-type zinc-finger motif lies at 14–56 (CPICQESLKEAVSTNCGHLFCRVCLTQHVEKASASGVFCCPLC). A B box-type zinc finger spans residues 66 to 107 (GTGYICPNHQKRVCRFCEESRLLLCVECLVSPEHMSHHELTI). Residues Cys71, His74, Cys93, and His99 each contribute to the Zn(2+) site. Residues 107–159 (IENALSHYKERLNRRSRKLRKDIAELQRLKAQQEKKLQALQFQVDHGNHRLEA) are a coiled coil.

This sequence belongs to the TRIM/RBCC family. Interacts with NEDD8. As to expression, highly expressed in normal gastrointestinal epithelia but that is down-regulated in gastrointestinal carcinomas and chronic inflammatory lesions of the gastrointestinal tract.

The enzyme catalyses S-ubiquitinyl-[E2 ubiquitin-conjugating enzyme]-L-cysteine + [acceptor protein]-L-lysine = [E2 ubiquitin-conjugating enzyme]-L-cysteine + N(6)-ubiquitinyl-[acceptor protein]-L-lysine.. Its function is as follows. E3 ubiquitin-protein ligase that plays a role in the limitation of the innate immune response. Mediates inhibition of the RLR signaling pathway by ubiquitinating RIGI and IFIH1 receptors, leading to their proteasomal degradation. Also promotes the neddylation of IKBKG/NEMO, stabilizing NFKBIA, and thereby inhibiting of NF-kappa-B nuclear translocation and activation. The protein is E3 ubiquitin ligase TRIM40 (TRIM40) of Homo sapiens (Human).